The following is an 88-amino-acid chain: MENNVQPYDVAGYAIASALVRLLVKKAIITAEEGKAIFSSSAEILKDAPAMRTSRREKLQLSKIMEDIISSLDPDADGSQKPQTHERQ.

It is found in the host cytoplasm. This is an uncharacterized protein from Escherichia phage Mu (Bacteriophage Mu).